An 817-amino-acid polypeptide reads, in one-letter code: Cargo-transport protein YPP1 (817 aa).

This sequence belongs to the YPP1 family. In terms of assembly, interacts with STT4 and ribosomes.

It localises to the cytoplasmic granule. The protein localises to the cell membrane. Functionally, involved in endocytosis. This Saccharomyces cerevisiae (strain YJM789) (Baker's yeast) protein is Cargo-transport protein YPP1 (YPP1).